The primary structure comprises 532 residues: Mitogen-activated protein kinase kinase mkk1 (532 aa).

One can recognise a Protein kinase domain in the interval 235-505 (IVELGGLGEG…PWKMLEHPWM (271 aa)). ATP contacts are provided by residues 241-249 (LGEGAGGAV) and lysine 264. Catalysis depends on aspartate 362, which acts as the Proton acceptor.

Belongs to the protein kinase superfamily. STE Ser/Thr protein kinase family. MAP kinase kinase subfamily.

The catalysed reaction is L-seryl-[protein] + ATP = O-phospho-L-seryl-[protein] + ADP + H(+). It carries out the reaction L-threonyl-[protein] + ATP = O-phospho-L-threonyl-[protein] + ADP + H(+). Its function is as follows. Mitogen-activated protein kinase kinase, part of the mkh1-mkk1-spm1 MAPK cascade that regulates regulates vegetative growth, conidial formation, colony surface hydrophobicity, osmotic stress, cell wall integrity maintenance, carbon and nitrogen source utilization, chitin distribution, septa formation, and pathogenicity. The protein is Mitogen-activated protein kinase kinase mkk1 of Cytospora mali (Apple Valsa canker fungus).